Reading from the N-terminus, the 308-residue chain is Ribosomal RNA small subunit methyltransferase H (308 aa).

Residues 36-38, D55, F86, D103, and Q110 each bind S-adenosyl-L-methionine; that span reads GGH.

This sequence belongs to the methyltransferase superfamily. RsmH family.

The protein localises to the cytoplasm. The enzyme catalyses cytidine(1402) in 16S rRNA + S-adenosyl-L-methionine = N(4)-methylcytidine(1402) in 16S rRNA + S-adenosyl-L-homocysteine + H(+). In terms of biological role, specifically methylates the N4 position of cytidine in position 1402 (C1402) of 16S rRNA. The polypeptide is Ribosomal RNA small subunit methyltransferase H (Helicobacter pylori (strain HPAG1)).